Consider the following 151-residue polypeptide: uncharacterized protein (151 aa).

3 consecutive transmembrane segments (helical) span residues Gly14–Ile34, Ile45–Ile65, and Val91–Ile111.

The protein localises to the cell membrane. This is an uncharacterized protein from Bacillus subtilis (strain 168).